Reading from the N-terminus, the 335-residue chain is Ornithine carbamoyltransferase (335 aa).

Residues 56–59 (STRT), Gln83, Arg107, and 134–137 (HPTQ) contribute to the carbamoyl phosphate site. L-ornithine contacts are provided by residues Asn168, Asp232, and 236–237 (SM). Carbamoyl phosphate is bound by residues 274–275 (CL) and Arg320.

Belongs to the aspartate/ornithine carbamoyltransferase superfamily. OTCase family.

It is found in the cytoplasm. The enzyme catalyses carbamoyl phosphate + L-ornithine = L-citrulline + phosphate + H(+). Its pathway is amino-acid biosynthesis; L-arginine biosynthesis; L-arginine from L-ornithine and carbamoyl phosphate: step 1/3. Functionally, reversibly catalyzes the transfer of the carbamoyl group from carbamoyl phosphate (CP) to the N(epsilon) atom of ornithine (ORN) to produce L-citrulline. This Yersinia pestis bv. Antiqua (strain Nepal516) protein is Ornithine carbamoyltransferase.